The following is an 877-amino-acid chain: GPI inositol-deacylase (877 aa).

The chain crosses the membrane as a helical span at residues 35–55 (FLSRLFCALAVLFSYSIYQSF). The active site involves serine 206. Residues asparagine 291, asparagine 336, asparagine 374, asparagine 448, and asparagine 473 are each glycosylated (N-linked (GlcNAc...) asparagine). 8 helical membrane-spanning segments follow: residues 597–617 (VLAWPVGWATVVLLFQLSDFI), 637–657 (MPICIVLLLLGATIQSQLPDF), 674–694 (PLVGILGVWTFGLLCVVSFVI), 735–755 (VLVNQVIPHQLIFLLCVILLW), 771–791 (ISTCAIFTTLLIPFKILHVAI), 809–829 (NFYYAIPPVLLVKCASCGGTI), 834–854 (VCLKACRIALIILIMSSFSVG), and 857–877 (WTWILSPIANAVLILFVASII).

Belongs to the GPI inositol-deacylase family.

The protein resides in the endoplasmic reticulum membrane. Functionally, involved in inositol deacylation of GPI-anchored proteins which plays important roles in the quality control and ER-associated degradation of GPI-anchored proteins. This is GPI inositol-deacylase (BST1) from Cryptococcus neoformans var. neoformans serotype D (strain JEC21 / ATCC MYA-565) (Filobasidiella neoformans).